The following is an 86-amino-acid chain: Small ribosomal subunit protein bS18 (86 aa).

It belongs to the bacterial ribosomal protein bS18 family. Part of the 30S ribosomal subunit. Forms a tight heterodimer with protein bS6.

Functionally, binds as a heterodimer with protein bS6 to the central domain of the 16S rRNA, where it helps stabilize the platform of the 30S subunit. In Campylobacter concisus (strain 13826), this protein is Small ribosomal subunit protein bS18.